Consider the following 174-residue polypeptide: Protein RESISTANCE TO POWDERY MILDEW 8.2 (174 aa).

Positions 1–153 (MIAEVAAGGA…IMPQPKFEIH (153 aa)) constitute an RPW8 domain. The chain crosses the membrane as a helical span at residues 7 to 23 (AGGALGLALSVLHEAVK). Residues 68-145 (VNKRLKLLLE…EISTKLDKIM (78 aa)) are a coiled coil.

Belongs to the plant RPW8 protein family.

The protein localises to the membrane. Disease resistance (R) protein that induces localized, salicylic acid-dependent defenses. Confers resistance to powdery mildew (e.g. Erysiphe cichoracearum UCSC1). The sequence is that of Protein RESISTANCE TO POWDERY MILDEW 8.2 from Arabidopsis thaliana (Mouse-ear cress).